The following is a 146-amino-acid chain: Hemoglobin subunit beta (146 aa).

Val-1 bears the N-acetylvaline mark. Residues His-2–His-146 form the Globin domain. Residue Thr-12 is modified to Phosphothreonine. Ser-44 is modified (phosphoserine). Lys-59 carries the post-translational modification N6-acetyllysine. His-63 is a heme b binding site. The residue at position 82 (Lys-82) is an N6-acetyllysine. His-92 is a heme b binding site. Cys-93 carries the post-translational modification S-nitrosocysteine. Position 144 is an N6-acetyllysine (Lys-144).

It belongs to the globin family. In terms of assembly, heterotetramer of two alpha chains and two beta chains. As to expression, red blood cells.

Functionally, involved in oxygen transport from the lung to the various peripheral tissues. The chain is Hemoglobin subunit beta (HBB) from Mustela lutreola (European mink).